The sequence spans 358 residues: Uroporphyrinogen decarboxylase (358 aa).

Substrate is bound by residues 29 to 33, Asp79, Tyr156, Thr211, and His329; that span reads RQAGR.

Belongs to the uroporphyrinogen decarboxylase family. In terms of assembly, homodimer.

The protein resides in the cytoplasm. The enzyme catalyses uroporphyrinogen III + 4 H(+) = coproporphyrinogen III + 4 CO2. The protein operates within porphyrin-containing compound metabolism; protoporphyrin-IX biosynthesis; coproporphyrinogen-III from 5-aminolevulinate: step 4/4. Functionally, catalyzes the decarboxylation of four acetate groups of uroporphyrinogen-III to yield coproporphyrinogen-III. In Idiomarina loihiensis (strain ATCC BAA-735 / DSM 15497 / L2-TR), this protein is Uroporphyrinogen decarboxylase.